The primary structure comprises 452 residues: Friend leukemia integration 1 transcription factor (452 aa).

Position 39 is a phosphoserine (Ser-39). One can recognise a PNT domain in the interval 112–198 (PPPPNMTTNE…SHLSYLRESS (87 aa)). Residues 209–271 (DQSSRLSVKE…PYQILGPTSS (63 aa)) form a disordered region. Positions 215-226 (SVKEDPSYDSVR) are enriched in basic and acidic residues. A compositionally biased stretch (polar residues) spans 248 to 257 (QTISKNTEQR). The ETS DNA-binding region spans 281 to 361 (IQLWQFLLEL…HGKRYAYKFD (81 aa)). The tract at residues 433–452 (NPNVPRHPNTHVPSHLGSYY) is disordered.

It belongs to the ETS family. Can form homodimers or heterodimers with ETV6/TEL1.

The protein localises to the nucleus. In terms of biological role, sequence-specific transcriptional activator. Recognizes the DNA sequence 5'-C[CA]GGAAGT-3'. In Homo sapiens (Human), this protein is Friend leukemia integration 1 transcription factor (FLI1).